Here is a 213-residue protein sequence, read N- to C-terminus: Probable RNA 2'-phosphotransferase (213 aa).

The protein belongs to the KptA/TPT1 family.

Removes the 2'-phosphate from RNA via an intermediate in which the phosphate is ADP-ribosylated by NAD followed by a presumed transesterification to release the RNA and generate ADP-ribose 1''-2''-cyclic phosphate (APPR&gt;P). May function as an ADP-ribosylase. The polypeptide is Probable RNA 2'-phosphotransferase (Pyrobaculum aerophilum (strain ATCC 51768 / DSM 7523 / JCM 9630 / CIP 104966 / NBRC 100827 / IM2)).